Consider the following 188-residue polypeptide: M-phase phosphoprotein 6 homolog (188 aa).

Residues 93 to 188 (EENVDEKDVS…NKNKKKKKRN (96 aa)) form a disordered region. Residues 120–149 (LTERERRKQELVSKKAEASRKMEVKAPAKE) show a composition bias toward basic and acidic residues. Ser-167 is modified (phosphoserine). The span at 174 to 188 (RKTKKNKNKKKKKRN) shows a compositional bias: basic residues.

The protein belongs to the MPP6 family. In terms of assembly, associates with the RNA exosome complex.

The protein localises to the nucleus. RNA-binding protein that associates with the RNA exosome complex. This is M-phase phosphoprotein 6 homolog from Schizosaccharomyces pombe (strain 972 / ATCC 24843) (Fission yeast).